The primary structure comprises 318 residues: MKPLNIIFAGTPDFAARHLQALLNSHHNVIGVYTQPDRPAGRGKKLTASPVKELAVANNIPVYQPGSLRKEPAQQELAALNADIMVVVAYGLILPKVVLDTPRLGCINVHGSILPRWRGAAPIQRALWAGDKETGVTVMQMDVGLDTGDMLLKTYLPIEDSDTSASLYEKLAEQGPVALLQALEGLANGTLAAEKQDEALANYAEKLSKEEARLDWNKSAKQLWQEVRAFNPWPVSYFEHQGNTIKVWQTQVSETTSTAAPGTIISASKKGIEVATADGVLTLLSMQLPGKKPLNVADILNARGEWFSPNTRLANEAQ.

A (6S)-5,6,7,8-tetrahydrofolate-binding site is contributed by 112–115; that stretch reads SILP.

Belongs to the Fmt family.

It carries out the reaction L-methionyl-tRNA(fMet) + (6R)-10-formyltetrahydrofolate = N-formyl-L-methionyl-tRNA(fMet) + (6S)-5,6,7,8-tetrahydrofolate + H(+). Attaches a formyl group to the free amino group of methionyl-tRNA(fMet). The formyl group appears to play a dual role in the initiator identity of N-formylmethionyl-tRNA by promoting its recognition by IF2 and preventing the misappropriation of this tRNA by the elongation apparatus. In Shewanella baltica (strain OS223), this protein is Methionyl-tRNA formyltransferase.